The following is a 388-amino-acid chain: Flap endonuclease 1 (388 aa).

The segment at 1–104 (MGILGLSKLI…GELAKRAERR (104 aa)) is N-domain. Aspartate 34 serves as a coordination point for Mg(2+). Arginine 47 and arginine 70 together coordinate DNA. Mg(2+) contacts are provided by aspartate 86, glutamate 158, glutamate 160, aspartate 179, and aspartate 181. An I-domain region spans residues 122–253 (EIEKFNRRLV…KRAIELINNY (132 aa)). Residue glutamate 158 coordinates DNA. Residues glycine 231 and aspartate 233 each coordinate DNA. A Mg(2+)-binding site is contributed by aspartate 233. The tract at residues 336–344 (TQVRLDSFF) is interaction with PCNA. Residues 343-388 (FFKTLPSTPSATNAAKRKAEEAKKSANNKKAKTSGGGGGGRGRRPK) are disordered.

This sequence belongs to the XPG/RAD2 endonuclease family. FEN1 subfamily. As to quaternary structure, interacts with PCNA. Three molecules of FEN1 bind to one PCNA trimer with each molecule binding to one PCNA monomer. PCNA stimulates the nuclease activity without altering cleavage specificity. Mg(2+) serves as cofactor. In terms of processing, phosphorylated. Phosphorylation upon DNA damage induces relocalization to the nuclear plasma.

It localises to the nucleus. Its subcellular location is the nucleolus. The protein resides in the nucleoplasm. It is found in the mitochondrion. Functionally, structure-specific nuclease with 5'-flap endonuclease and 5'-3' exonuclease activities involved in DNA replication and repair. During DNA replication, cleaves the 5'-overhanging flap structure that is generated by displacement synthesis when DNA polymerase encounters the 5'-end of a downstream Okazaki fragment. It enters the flap from the 5'-end and then tracks to cleave the flap base, leaving a nick for ligation. Also involved in the long patch base excision repair (LP-BER) pathway, by cleaving within the apurinic/apyrimidinic (AP) site-terminated flap. Acts as a genome stabilization factor that prevents flaps from equilibrating into structures that lead to duplications and deletions. Also possesses 5'-3' exonuclease activity on nicked or gapped double-stranded DNA, and exhibits RNase H activity. Also involved in replication and repair of rDNA and in repairing mitochondrial DNA. The protein is Flap endonuclease 1 of Drosophila ananassae (Fruit fly).